The chain runs to 525 residues: Cyclic AMP-responsive element-binding protein 3-like protein 2 (525 aa).

The Cytoplasmic portion of the chain corresponds to 1–382 (MEIMESGDPV…SCKAAGTQTG (382 aa)). Disordered regions lie at residues 85-104 (LCGD…DDNF), 203-267 (EALQ…QGSG), and 309-338 (NKIS…SSEN). Composition is skewed to polar residues over residues 90–102 (RPQS…SSDD) and 213–239 (SSHG…QSQA). The 64-residue stretch at 299–362 (ALKKIRRKIK…RTLLQQLQRL (64 aa)) folds into the bZIP domain. A basic motif region spans residues 301-330 (KKIRRKIKNKISAQESRRKKKEYMDSLEKR). Positions 322–332 (EYMDSLEKRVE) are enriched in basic and acidic residues. Residues 341–362 (LRKKVEVLESTNRTLLQQLQRL) form a leucine-zipper region. The chain crosses the membrane as a helical; Signal-anchor for type II membrane protein span at residues 383-403 (TCLMMVVLCFAVIFGSFTQNL). At 404–525 (DMYSSSSKTI…ELDRTVNTTS (122 aa)) the chain is on the lumenal side. An S1P recognition motif is present at residues 433–436 (RKLL). N-linked (GlcNAc...) asparagine glycosylation is found at Asn-490, Asn-509, and Asn-522.

Belongs to the bZIP family. ATF subfamily. In terms of assembly, binds DNA as a dimer. In terms of processing, upon ER stress, translocated to the Golgi apparatus, where it is processed by regulated intramembrane proteolysis (RIP) to release the cytosol-facing N-terminal transcription factor domain. The cleavage is performed sequentially by site-1 and site-2 proteases (S1P/mbtps1 and S2P/mbtps2).

The protein localises to the endoplasmic reticulum membrane. Its subcellular location is the nucleus. Its function is as follows. Transcription factor involved in unfolded protein response (UPR). In the absence of endoplasmic reticulum (ER) stress, inserted into ER membranes, with N-terminal DNA-binding and transcription activation domains oriented toward the cytosolic face of the membrane. In response to ER stress, transported to the Golgi, where it is cleaved in a site-specific manner by resident proteases S1P/mbtps1 and S2P/mbtps2. The released N-terminal cytosolic domain is translocated to the nucleus to effect transcription of specific target genes. Plays a critical role in chondrogenesis. May protect neuroblastoma cells from ER stress-induced death. In vitro activates transcription of target genes via direct binding to the CRE site. The sequence is that of Cyclic AMP-responsive element-binding protein 3-like protein 2 (creb3l2) from Xenopus laevis (African clawed frog).